A 350-amino-acid polypeptide reads, in one-letter code: Biotin synthase (350 aa).

Residues 41-268 (NEVQISRLLS…KSRVRLSAGR (228 aa)) enclose the Radical SAM core domain. Residues Cys-56, Cys-60, and Cys-63 each coordinate [4Fe-4S] cluster. [2Fe-2S] cluster contacts are provided by Cys-100, Cys-131, Cys-191, and Arg-263.

This sequence belongs to the radical SAM superfamily. Biotin synthase family. Homodimer. It depends on [4Fe-4S] cluster as a cofactor. The cofactor is [2Fe-2S] cluster.

It catalyses the reaction (4R,5S)-dethiobiotin + (sulfur carrier)-SH + 2 reduced [2Fe-2S]-[ferredoxin] + 2 S-adenosyl-L-methionine = (sulfur carrier)-H + biotin + 2 5'-deoxyadenosine + 2 L-methionine + 2 oxidized [2Fe-2S]-[ferredoxin]. The protein operates within cofactor biosynthesis; biotin biosynthesis; biotin from 7,8-diaminononanoate: step 2/2. In terms of biological role, catalyzes the conversion of dethiobiotin (DTB) to biotin by the insertion of a sulfur atom into dethiobiotin via a radical-based mechanism. The protein is Biotin synthase of Shewanella halifaxensis (strain HAW-EB4).